The chain runs to 113 residues: Cell cycle protein GpsB (113 aa).

Residues Leu32–Gly70 adopt a coiled-coil conformation.

The protein belongs to the GpsB family. In terms of assembly, forms polymers through the coiled coil domains. Interacts with PBP1, MreC and EzrA.

The protein resides in the cytoplasm. Its function is as follows. Divisome component that associates with the complex late in its assembly, after the Z-ring is formed, and is dependent on DivIC and PBP2B for its recruitment to the divisome. Together with EzrA, is a key component of the system that regulates PBP1 localization during cell cycle progression. Its main role could be the removal of PBP1 from the cell pole after pole maturation is completed. Also contributes to the recruitment of PBP1 to the division complex. Not essential for septum formation. The polypeptide is Cell cycle protein GpsB (Pediococcus pentosaceus (strain ATCC 25745 / CCUG 21536 / LMG 10740 / 183-1w)).